The sequence spans 133 residues: Large ribosomal subunit protein bL12 (133 aa).

Residues 98–118 (DMVESTPKPIKEGTGKEDAED) form a disordered region.

This sequence belongs to the bacterial ribosomal protein bL12 family. In terms of assembly, homodimer. Part of the ribosomal stalk of the 50S ribosomal subunit. Forms a multimeric L10(L12)X complex, where L10 forms an elongated spine to which 2 to 4 L12 dimers bind in a sequential fashion. Binds GTP-bound translation factors.

Its function is as follows. Forms part of the ribosomal stalk which helps the ribosome interact with GTP-bound translation factors. Is thus essential for accurate translation. This Crocosphaera subtropica (strain ATCC 51142 / BH68) (Cyanothece sp. (strain ATCC 51142)) protein is Large ribosomal subunit protein bL12.